The primary structure comprises 1180 residues: Pyruvate carboxylase 2 (1180 aa).

Ser-2 carries the N-acetylserine modification. A Biotin carboxylation domain is found at 19–471 (EKNKILVANR…WTTFIDDTPQ (453 aa)). Residues Lys-137, Glu-221, and His-256 each contribute to the ATP site. Residues 141–338 (RHLAARANVP…IVSAQIQIAA (198 aa)) enclose the ATP-grasp domain. Residue Arg-313 is part of the active site. The 268-residue stretch at 558–825 (TLLMDTTWRD…DTGINVEHVR (268 aa)) folds into the Pyruvate carboxyltransferase domain. Substrate is bound by residues 566 to 570 (RDAHQ) and Arg-639. Residue Asp-567 coordinates a divalent metal cation. Residues Lys-735, His-765, and His-767 each contribute to the a divalent metal cation site. The residue at position 735 (Lys-735) is an N6-carboxylysine. Thr-899 contacts substrate. In terms of domain architecture, Biotinyl-binding spans 1095 to 1170 (KADVHDTHQI…DASDLLVVLE (76 aa)). An N6-biotinyllysine modification is found at Lys-1136.

As to quaternary structure, homotetramer. Biotin is required as a cofactor. It depends on Zn(2+) as a cofactor.

The protein resides in the cytoplasm. The catalysed reaction is hydrogencarbonate + pyruvate + ATP = oxaloacetate + ADP + phosphate + H(+). It participates in carbohydrate biosynthesis; gluconeogenesis. In terms of biological role, pyruvate carboxylase catalyzes a 2-step reaction, involving the ATP-dependent carboxylation of the covalently attached biotin in the first step and the transfer of the carboxyl group to pyruvate in the second. This Saccharomyces cerevisiae (strain ATCC 204508 / S288c) (Baker's yeast) protein is Pyruvate carboxylase 2 (PYC2).